The chain runs to 121 residues: Large ribosomal subunit protein bL12 (121 aa).

The protein belongs to the bacterial ribosomal protein bL12 family. As to quaternary structure, homodimer. Part of the ribosomal stalk of the 50S ribosomal subunit. Forms a multimeric L10(L12)X complex, where L10 forms an elongated spine to which 2 to 4 L12 dimers bind in a sequential fashion. Binds GTP-bound translation factors.

Its function is as follows. Forms part of the ribosomal stalk which helps the ribosome interact with GTP-bound translation factors. Is thus essential for accurate translation. The sequence is that of Large ribosomal subunit protein bL12 from Lachnospira eligens (strain ATCC 27750 / DSM 3376 / VPI C15-48 / C15-B4) (Eubacterium eligens).